The following is a 1032-amino-acid chain: UPF0182 protein sll1060 (1032 aa).

The next 9 membrane-spanning stretches (helical) occupy residues 27 to 49 (WVKGAIVLAIALVGLEVIARIYV), 69 to 87 (WQGSIALITGFISWGFIVF), 144 to 166 (VLLPLIIVLQLILISLVMYYVFI), 197 to 219 (FSGMGSQLGVTALAGMLALIGVL), 226 to 248 (PGLVFILSAVWGLLLSGNWFRLL), 283 to 300 (WWRGLFLFSLLGVTLIIL), 321 to 339 (HISALGAAVALTLGVEHWL), 364 to 386 (LPVETGLAIFSMAIAIWLGWLSV), and 406 to 428 (IIGLWLPVAVYLLILLLQNLGGW).

Belongs to the UPF0182 family.

Its subcellular location is the cell membrane. This chain is UPF0182 protein sll1060, found in Synechocystis sp. (strain ATCC 27184 / PCC 6803 / Kazusa).